A 128-amino-acid polypeptide reads, in one-letter code: MTKEELIQAIKEMTVAELAELVKALEEEFGVSASAPVAVAAMPGAAGGQAAQEEEKTEFNVVLKSFGDKKIAVIKAVRAITGLGLKEAKELVEKAGSPDAIIKEGISKSEAEEIKKQLEEAGAEVELK.

Belongs to the bacterial ribosomal protein bL12 family. Homodimer. Part of the ribosomal stalk of the 50S ribosomal subunit. Forms a multimeric L10(L12)X complex, where L10 forms an elongated spine to which 2 to 4 L12 dimers bind in a sequential fashion. Binds GTP-bound translation factors.

Functionally, forms part of the ribosomal stalk which helps the ribosome interact with GTP-bound translation factors. Is thus essential for accurate translation. This chain is Large ribosomal subunit protein bL12, found in Kosmotoga olearia (strain ATCC BAA-1733 / DSM 21960 / TBF 19.5.1).